Here is a 106-residue protein sequence, read N- to C-terminus: ATP-dependent Clp protease adapter protein ClpS (106 aa).

Basic and acidic residues predominate over residues 1 to 13 (MPRKTSHEHDHGL). The disordered stretch occupies residues 1–21 (MPRKTSHEHDHGLVVETSKPE).

It belongs to the ClpS family. In terms of assembly, binds to the N-terminal domain of the chaperone ClpA.

Its function is as follows. Involved in the modulation of the specificity of the ClpAP-mediated ATP-dependent protein degradation. The protein is ATP-dependent Clp protease adapter protein ClpS of Xanthomonas campestris pv. campestris (strain 8004).